The sequence spans 87 residues: UPF0250 protein BUsg_472 (87 aa).

The protein belongs to the UPF0250 family.

The chain is UPF0250 protein BUsg_472 from Buchnera aphidicola subsp. Schizaphis graminum (strain Sg).